The following is a 466-amino-acid chain: Chromosomal replication initiator protein DnaA (466 aa).

Residues 1–77 (MSQEIWADVL…GAEHPQVEFQ (77 aa)) are domain I, interacts with DnaA modulators. A domain II region spans residues 77–121 (QVLPAAQDALLLPNDPPPAPEAAAPTPKTKAAPTPPPSTPGDNRK). The disordered stretch occupies residues 87-122 (LLPNDPPPAPEAAAPTPKTKAAPTPPPSTPGDNRKT). Residues 97 to 108 (EAAAPTPKTKAA) are compositionally biased toward low complexity. Residues 122 to 338 (TLNPKYTFEN…GALMRVVAFA (217 aa)) are domain III, AAA+ region. ATP is bound by residues glycine 166, glycine 168, lysine 169, and threonine 170. The segment at 339-466 (SLNNVPFSRA…GKEEEEEVGA (128 aa)) is domain IV, binds dsDNA.

The protein belongs to the DnaA family. Oligomerizes as a right-handed, spiral filament on DNA at oriC.

The protein resides in the cytoplasm. Its function is as follows. Plays an essential role in the initiation and regulation of chromosomal replication. ATP-DnaA binds to the origin of replication (oriC) to initiate formation of the DNA replication initiation complex once per cell cycle. Binds the DnaA box (a 9 base pair repeat at the origin) and separates the double-stranded (ds)DNA. Forms a right-handed helical filament on oriC DNA; dsDNA binds to the exterior of the filament while single-stranded (ss)DNA is stabiized in the filament's interior. The ATP-DnaA-oriC complex binds and stabilizes one strand of the AT-rich DNA unwinding element (DUE), permitting loading of DNA polymerase. After initiation quickly degrades to an ADP-DnaA complex that is not apt for DNA replication. Binds acidic phospholipids. In terms of biological role, strand separation requires the DnaA boxes and adjacent DnaA-trio motifs but works equally well with ADP or ATP. This chain is Chromosomal replication initiator protein DnaA, found in Deinococcus radiodurans (strain ATCC 13939 / DSM 20539 / JCM 16871 / CCUG 27074 / LMG 4051 / NBRC 15346 / NCIMB 9279 / VKM B-1422 / R1).